The following is a 297-amino-acid chain: 1D-myo-inositol 2-acetamido-2-deoxy-alpha-D-glucopyranoside deacetylase (297 aa).

3 residues coordinate Zn(2+): His14, Asp17, and His149.

The protein belongs to the MshB deacetylase family. Zn(2+) is required as a cofactor.

It carries out the reaction 1D-myo-inositol 2-acetamido-2-deoxy-alpha-D-glucopyranoside + H2O = 1D-myo-inositol 2-amino-2-deoxy-alpha-D-glucopyranoside + acetate. Its function is as follows. Catalyzes the deacetylation of 1D-myo-inositol 2-acetamido-2-deoxy-alpha-D-glucopyranoside (GlcNAc-Ins) in the mycothiol biosynthesis pathway. This is 1D-myo-inositol 2-acetamido-2-deoxy-alpha-D-glucopyranoside deacetylase from Thermomonospora curvata (strain ATCC 19995 / DSM 43183 / JCM 3096 / KCTC 9072 / NBRC 15933 / NCIMB 10081 / Henssen B9).